A 475-amino-acid polypeptide reads, in one-letter code: Ribulose bisphosphate carboxylase large chain (475 aa).

The propeptide occupies 1-2; it reads MS. At Pro3 the chain carries N-acetylproline. Lys14 carries the N6,N6,N6-trimethyllysine modification. Substrate is bound by residues Asn123 and Thr173. Lys175 acts as the Proton acceptor in catalysis. Lys177 provides a ligand contact to substrate. Mg(2+) is bound by residues Lys201, Asp203, and Glu204. Lys201 carries the N6-carboxylysine modification. His294 serves as the catalytic Proton acceptor. Arg295, His327, and Ser379 together coordinate substrate.

It belongs to the RuBisCO large chain family. Type I subfamily. As to quaternary structure, heterohexadecamer of 8 large chains and 8 small chains; disulfide-linked. The disulfide link is formed within the large subunit homodimers. Mg(2+) serves as cofactor. Post-translationally, the disulfide bond which can form in the large chain dimeric partners within the hexadecamer appears to be associated with oxidative stress and protein turnover.

The protein localises to the plastid. The protein resides in the chloroplast. The enzyme catalyses 2 (2R)-3-phosphoglycerate + 2 H(+) = D-ribulose 1,5-bisphosphate + CO2 + H2O. The catalysed reaction is D-ribulose 1,5-bisphosphate + O2 = 2-phosphoglycolate + (2R)-3-phosphoglycerate + 2 H(+). Functionally, ruBisCO catalyzes two reactions: the carboxylation of D-ribulose 1,5-bisphosphate, the primary event in carbon dioxide fixation, as well as the oxidative fragmentation of the pentose substrate in the photorespiration process. Both reactions occur simultaneously and in competition at the same active site. The protein is Ribulose bisphosphate carboxylase large chain of Angiopteris evecta (Mule's foot fern).